A 684-amino-acid polypeptide reads, in one-letter code: Glycine--tRNA ligase beta subunit (684 aa).

Belongs to the class-II aminoacyl-tRNA synthetase family. Tetramer of two alpha and two beta subunits.

It localises to the cytoplasm. The enzyme catalyses tRNA(Gly) + glycine + ATP = glycyl-tRNA(Gly) + AMP + diphosphate. This Pseudomonas syringae pv. tomato (strain ATCC BAA-871 / DC3000) protein is Glycine--tRNA ligase beta subunit.